The sequence spans 420 residues: Tryptophan synthase beta chain (420 aa).

K99 is subject to N6-(pyridoxal phosphate)lysine.

Belongs to the TrpB family. Tetramer of two alpha and two beta chains. The cofactor is pyridoxal 5'-phosphate.

The catalysed reaction is (1S,2R)-1-C-(indol-3-yl)glycerol 3-phosphate + L-serine = D-glyceraldehyde 3-phosphate + L-tryptophan + H2O. The protein operates within amino-acid biosynthesis; L-tryptophan biosynthesis; L-tryptophan from chorismate: step 5/5. The beta subunit is responsible for the synthesis of L-tryptophan from indole and L-serine. The sequence is that of Tryptophan synthase beta chain from Helicobacter hepaticus (strain ATCC 51449 / 3B1).